The sequence spans 263 residues: MSPMNAFDSQTEDSSPAIGRNLRSRPLARKKLSEMVEEELEQMIRRREFGEGEQLPSERELMAFFNVGRPSVREALAALKRKGLVQINNGERARVSRPSADTIIGELSGMAKDFLSHPGGIAHFEQLRLFFESSLVRYAAEHATNEQIDLLAKALEINSQSLDNNAAFIRSDVDFHRVLAEIPGNPIFMAIHVALLDWLIAARPTVADQALHEHNNVSYQQHIAIVDAIRRHDPDEADRALQSHLNSVSATWHAFGQTTNKKK.

Positions 1 to 24 (MSPMNAFDSQTEDSSPAIGRNLRS) are disordered. The region spanning 30-98 (KKLSEMVEEE…NGERARVSRP (69 aa)) is the HTH gntR-type domain. Positions 58 to 77 (ERELMAFFNVGRPSVREALA) form a DNA-binding region, H-T-H motif.

The protein belongs to the NanR family.

Its function is as follows. Transcriptional repressor that controls expression of the genes required for the catabolism of sialic acids. The chain is HTH-type transcriptional repressor NanR from Escherichia coli O127:H6 (strain E2348/69 / EPEC).